A 517-amino-acid chain; its full sequence is MFS efflux transporter inpD (517 aa).

The segment at 1 to 24 (MEKTQTPSLTPDELSARSSTPFEE) is disordered. 5 consecutive transmembrane segments (helical) span residues 37–57 (LKFSFIFVGLCLSVFQVALSL), 59–79 (DIGWYGSAYLFTDCAFQLVFG), 89–109 (IVYLGALLLFEIGSIICATAP), 112–132 (IALILGRTIAGIGAGGILSGA), and 151–171 (ILGAVNGIAFICGPLLAGGII). Asn-172 carries an N-linked (GlcNAc...) asparagine glycan. Transmembrane regions (helical) follow at residues 178–198 (WIFYINPIISAPTFFITVFLL), 219–239 (LPAFTLFLGSILCLILALLWG), 247–267 (NARIIVLFILFGVIMLAFMLV), 292–312 (FFSFCTSGTGFILEYYLPIWL), 328–348 (LPIIAAAVVFTTLCGILTPVI), 352–372 (VPFMIIATMLLSVGMGLLSTL), 381–401 (VLGFQVPAGVGLGCALQQTLV), 412–432 (IPIGVSLIVLAQTLGGTIALS), and 485–505 (AIVKTWYLSIGLAAASIIGVL).

The protein belongs to the major facilitator superfamily.

Its subcellular location is the cell membrane. MFS efflux transporter; part of the inp gene cluster that mediates the biosynthesis of fellutamide B, a mycotoxin that acts as a proteasome inhibitor. In the first step of fellutabmide B biosynthesis inpC activates 3-hydroxydodecanoic acid to generate 3-hydroxydodecanoyl-AMP that is then loaded onto the T0 domain of inpB. The 3-hydroxydodecanoyl-S-phosphopantetheinyl-T0 is sequentially extended with L-Asn and L-Gln by the two CAT modules of inpB. The linear lipodipeptide from inpB is then transferred onto inpA for the addition of the third amino acid, L-Leu. Reductive releasing of the lipotripeptide by the TE domain of inpA produces (2S)-fellutamide B. InpF might be involved in the release and transfer of the lipodipeptide from inpB to inpA. The inp cluster-encoded proteasome subunit inpE confers resistance to internally produced fellutamides. The MFS efflux transporter inpD may contribute to fellutamide resistance as well. This is MFS efflux transporter inpD from Emericella nidulans (strain FGSC A4 / ATCC 38163 / CBS 112.46 / NRRL 194 / M139) (Aspergillus nidulans).